A 158-amino-acid chain; its full sequence is U4/U6.U5 small nuclear ribonucleoprotein 27 kDa protein (158 aa).

Basic residues predominate over residues 1–30; sequence MGRSRSRTPPRRERRRSRSSSRDRERRRRE. Positions 1 to 100 are disordered; it reads MGRSRSRTPP…ISAEDMQGKT (100 aa). Basic and acidic residues predominate over residues 31–41; that stretch reads RERSRSRDRDR. Residues 42-62 show a composition bias toward basic residues; it reads RRSRSRSPHRRRSRSPRRHRS. Over residues 69-86 the composition is skewed to basic and acidic residues; sequence RQKDRRDDDRKDVKEKPA.

It belongs to the SNUT3 family. In terms of assembly, part of a tri-snRNP complex.

The protein resides in the nucleus. Functionally, may play a role in mRNA splicing. The sequence is that of U4/U6.U5 small nuclear ribonucleoprotein 27 kDa protein (snrnp27) from Danio rerio (Zebrafish).